Reading from the N-terminus, the 56-residue chain is UPF0391 membrane protein HCH_04387 (56 aa).

The next 2 membrane-spanning stretches (helical) occupy residues 6–26 and 30–50; these read IVFF…IAAA and IAQI…IAGG.

It belongs to the UPF0391 family.

It is found in the cell membrane. This Hahella chejuensis (strain KCTC 2396) protein is UPF0391 membrane protein HCH_04387.